Consider the following 202-residue polypeptide: Superoxide dismutase [Mn] (202 aa).

A Mn(2+)-binding site is contributed by histidine 27. Phosphothreonine is present on residues threonine 34 and threonine 70. Mn(2+) is bound by residues histidine 82, aspartate 164, and histidine 168.

This sequence belongs to the iron/manganese superoxide dismutase family. Homodimer. Requires Mn(2+) as cofactor.

The catalysed reaction is 2 superoxide + 2 H(+) = H2O2 + O2. Its function is as follows. Destroys superoxide anion radicals which are normally produced within the cells and which are toxic to biological systems. In Halalkalibacterium halodurans (strain ATCC BAA-125 / DSM 18197 / FERM 7344 / JCM 9153 / C-125) (Bacillus halodurans), this protein is Superoxide dismutase [Mn] (sodA).